Here is a 436-residue protein sequence, read N- to C-terminus: Transcription factor MYB124 (436 aa).

The segment covering 1–11 has biased composition (basic residues); sequence MEDTKKKKKKN. The tract at residues 1-23 is disordered; the sequence is MEDTKKKKKKNINNNQDSKKKER. The Nuclear localization signal 1 motif lies at 8–15; it reads KKKNINNN. 2 HTH myb-type domains span residues 20-71 and 72-126; these read KKER…YTYL and NSDF…KKRA. DNA-binding regions (H-T-H motif) lie at residues 48 to 71 and 99 to 122; these read WAII…YTYL and WTEI…TTLC. The Nuclear localization signal 2 signature appears at 151 to 158; sequence PRKSENET. The tract at residues 309-328 is disordered; it reads SWRQPDLHDSPASSEYSSGS. Polar residues predominate over residues 319–328; sequence PASSEYSSGS.

Interacts with RBR1. In terms of tissue distribution, expressed in all shoot organs with higher levels in leaves, stems, flowers, siliques and floral buds. Also detected in roots tips.

The protein localises to the nucleus. Transcription factor that binds to DNA in promoters cis-regulatory element 5'-GGCGCGC-3' of cell cycle genes, including cyclins, cyclin-dependent kinases (CDKs), and components of the pre-replication complex. Binds to DNA in promoters cis-regulatory element 5'-AGCCG-3' of auxin regulated genes (e.g. PIN3 and PIN7). Together with FAMA and MYB88, ensures that stomata contain just two guard cells (GCs) by enforcing a single symmetric precursor cell division before stomatal maturity. Represses the expression of the mitosis-inducing factors CDKB1-1 and CDKA-1, specifically required for the last guard mother cells (GMC) symmetric divisions in the stomatal pathway. Represses CYCA2-3 in newly formed guard cells. Together with MYB88, regulates stomata spacing by restricting divisions late in the stomatal cell lineage thus limiting the number of GMC divisions. In collaboration with CDKB1-1 and CDKB1-2, restrict the G1/S transition and chloroplast and nuclear number during stomatal formation, and normally maintain fate and developmental progression throughout the stomatal cell lineage. Also involved in the shape regulation of pavement cells. Involved in sensing and/or transducing abiotic stress (e.g. drought and salt), probably via the positive regulation of NAC019. Regulates female reproduction being required for entry into megasporogenesis, probably via the regulation of cell cycle genes. Promotes histone H3K27me3 marks and represses stem cell gene expression. Required for lateral roots (LRs) initiation via the regulation of PIN3 expression in an auxin-dependent manner. Involved in responses to gravity stimulation in primary roots by regulating the transcription of PIN3 and PIN7 in gravity-sensing cells, thus modulating auxin asymmetric redistribution. This Arabidopsis thaliana (Mouse-ear cress) protein is Transcription factor MYB124.